The chain runs to 157 residues: MATPPKRRALDTVGEKVLRYEAFISDVLQRDLQKVLDHRDKVYEQLSVYLQLRNVIERLQETNHSELYMQVDLGCNFFVDTMVPDTSRIYVALGYGFFLELTLAEALKFIDRKSSLLTELSDSLTKDSMNIKANIHMMLEGLRELQGLQNFPEPSPH.

Belongs to the UXT family. As to quaternary structure, homohexamer. Component of the PAQosome complex which is responsible for the biogenesis of several protein complexes and which consists of R2TP complex members RUVBL1, RUVBL2, RPAP3 and PIH1D1, URI complex members PFDN2, PFDN6, PDRG1, UXT and URI1 as well as ASDURF, POLR2E and DNAAF10/WDR92. Interacts with LRPPRC. Interacts with androgen receptor AR (via N-terminus). Interacts with estrogen receptor ESR1; the interaction relocalizes ESR1 to the cytoplasm. In the nucleus, interacts specifically with RELA (via RHD domain) and forms a dynamic complex with NF-kappa-B and is recruited to the NF-kappa-B enhanceosome upon stimulation. Interacts with MECOM. Interacts with URI1.

The protein localises to the cytoplasm. Its subcellular location is the nucleus. It localises to the cytoskeleton. It is found in the microtubule organizing center. The protein resides in the centrosome. The protein localises to the spindle pole. In terms of biological role, involved in gene transcription regulation. Acts in concert with the corepressor URI1 to regulate androgen receptor AR-mediated transcription. Together with URI1, associates with chromatin to the NKX3-1 promoter region. Negatively regulates the transcriptional activity of the estrogen receptor ESR1 by inducing its translocation into the cytoplasm. May act as nuclear chaperone that facilitates the formation of the NF-kappa-B enhanceosome and thus positively regulates NF-kappa-B transcription activity. Potential component of mitochondrial-associated LRPPRC, a multidomain organizer that potentially integrates mitochondria and the microtubular cytoskeleton with chromosome remodeling. Increasing concentrations of UXT contributes to progressive aggregation of mitochondria and cell death potentially through its association with LRPPRC. Suppresses cell transformation and it might mediate this function by interaction and inhibition of the biological activity of cell proliferation and survival stimulatory factors like MECOM. This chain is Protein UXT (Uxt), found in Rattus norvegicus (Rat).